A 665-amino-acid polypeptide reads, in one-letter code: tRNA 5-methylaminomethyl-2-thiouridine biosynthesis bifunctional protein MnmC (665 aa).

The segment at 1–243 (MSQTSLHHAR…KREMLAGERA (243 aa)) is tRNA (mnm(5)s(2)U34)-methyltransferase. The segment at 268 to 665 (IGGGIASAMT…RKLLKGKPLQ (398 aa)) is FAD-dependent cmnm(5)s(2)U34 oxidoreductase.

It in the N-terminal section; belongs to the methyltransferase superfamily. tRNA (mnm(5)s(2)U34)-methyltransferase family. This sequence in the C-terminal section; belongs to the DAO family. The cofactor is FAD.

The protein localises to the cytoplasm. It catalyses the reaction 5-aminomethyl-2-thiouridine(34) in tRNA + S-adenosyl-L-methionine = 5-methylaminomethyl-2-thiouridine(34) in tRNA + S-adenosyl-L-homocysteine + H(+). In terms of biological role, catalyzes the last two steps in the biosynthesis of 5-methylaminomethyl-2-thiouridine (mnm(5)s(2)U) at the wobble position (U34) in tRNA. Catalyzes the FAD-dependent demodification of cmnm(5)s(2)U34 to nm(5)s(2)U34, followed by the transfer of a methyl group from S-adenosyl-L-methionine to nm(5)s(2)U34, to form mnm(5)s(2)U34. This chain is tRNA 5-methylaminomethyl-2-thiouridine biosynthesis bifunctional protein MnmC, found in Aeromonas hydrophila subsp. hydrophila (strain ATCC 7966 / DSM 30187 / BCRC 13018 / CCUG 14551 / JCM 1027 / KCTC 2358 / NCIMB 9240 / NCTC 8049).